The sequence spans 400 residues: Iron(III) enterobactin esterase (400 aa).

The protein belongs to the Fes family.

Its subcellular location is the cytoplasm. It carries out the reaction Fe(III)-enterobactin + 3 H2O + H(+) = Fe(III)-[N-(2,3-dihydroxybenzoyl)-L-serine] + 2 N-(2,3-dihydroxybenzoyl)-L-serine. It catalyses the reaction Fe(III)-enterobactin + H2O = Fe(III)-[N-(2,3-dihydroxybenzoyl)-L-serine]3 + H(+). The catalysed reaction is Fe(III)-[N-(2,3-dihydroxybenzoyl)-L-serine]3 + H2O + H(+) = Fe(III)-[N-(2,3-dihydroxybenzoyl)-L-serine]2 + N-(2,3-dihydroxybenzoyl)-L-serine. The enzyme catalyses Fe(III)-[N-(2,3-dihydroxybenzoyl)-L-serine]2 + H2O + H(+) = Fe(III)-[N-(2,3-dihydroxybenzoyl)-L-serine] + N-(2,3-dihydroxybenzoyl)-L-serine. It carries out the reaction enterobactin + 3 H2O = 3 N-(2,3-dihydroxybenzoyl)-L-serine + 2 H(+). Catalyzes the hydrolysis of ferric enterobactin (Fe-Ent). Is responsible for the release of iron from ferric enterobactin. Also catalyzes the hydrolysis of iron-free enterobactin (Ent). Hydrolyzes ferric monoglucosyl-C-Ent (Fe-MGE) poorly and does not hydrolyze ferric diglucosyl-C-Ent (Fe-DGE) or ferric triglucosyl-C-Ent (Fe-TGE) at all. Also hydrolyzes apo MGE, but catalyzes the hydrolysis of apo DGE very poorly, and does not process apo TGE at all. The catalytic efficiency for processing Fe-Ent is much higher than that for apo Ent, suggesting that Fe-Ent is the physiological substrate. This Escherichia coli O6:H1 (strain CFT073 / ATCC 700928 / UPEC) protein is Iron(III) enterobactin esterase.